The following is a 39-amino-acid chain: uncharacterized protein (39 aa).

The signal sequence occupies residues 1–21; sequence MHLRSRWWLALLYCKDPVSRS.

This is an uncharacterized protein from Saccharomyces cerevisiae (strain ATCC 204508 / S288c) (Baker's yeast).